We begin with the raw amino-acid sequence, 397 residues long: Elongation factor Tu (397 aa).

Residues 10-207 (KPHVNIGTIG…AVDESIPDPV (198 aa)) enclose the tr-type G domain. The interval 19–26 (GHVDHGKT) is G1. 19-26 (GHVDHGKT) provides a ligand contact to GTP. Residue T26 participates in Mg(2+) binding. The tract at residues 63-67 (GITIN) is G2. Residues 84–87 (DAPG) form a G3 region. GTP contacts are provided by residues 84-88 (DAPGH) and 139-142 (NKAD). The segment at 139–142 (NKAD) is G4. The interval 177–179 (SGL) is G5.

Belongs to the TRAFAC class translation factor GTPase superfamily. Classic translation factor GTPase family. EF-Tu/EF-1A subfamily. As to quaternary structure, monomer.

It is found in the cytoplasm. The catalysed reaction is GTP + H2O = GDP + phosphate + H(+). Functionally, GTP hydrolase that promotes the GTP-dependent binding of aminoacyl-tRNA to the A-site of ribosomes during protein biosynthesis. This Tropheryma whipplei (strain TW08/27) (Whipple's bacillus) protein is Elongation factor Tu.